The chain runs to 377 residues: Chaperone protein DnaJ (377 aa).

The region spanning 5–70 (DFYETLGVSK…QKRAAYDRFG (66 aa)) is the J domain. The segment at 138 to 216 (GKTAQIRVPT…CHGQGRVTEE (79 aa)) adopts a CR-type zinc-finger fold. Residues Cys-151, Cys-154, Cys-168, Cys-171, Cys-190, Cys-193, Cys-204, and Cys-207 each coordinate Zn(2+). 4 CXXCXGXG motif repeats span residues 151–158 (CDVCSGSG), 168–175 (CATCQGSG), 190–197 (CPTCHGRG), and 204–211 (CGKCHGQG).

It belongs to the DnaJ family. In terms of assembly, homodimer. Zn(2+) is required as a cofactor.

The protein resides in the cytoplasm. Participates actively in the response to hyperosmotic and heat shock by preventing the aggregation of stress-denatured proteins and by disaggregating proteins, also in an autonomous, DnaK-independent fashion. Unfolded proteins bind initially to DnaJ; upon interaction with the DnaJ-bound protein, DnaK hydrolyzes its bound ATP, resulting in the formation of a stable complex. GrpE releases ADP from DnaK; ATP binding to DnaK triggers the release of the substrate protein, thus completing the reaction cycle. Several rounds of ATP-dependent interactions between DnaJ, DnaK and GrpE are required for fully efficient folding. Also involved, together with DnaK and GrpE, in the DNA replication of plasmids through activation of initiation proteins. The protein is Chaperone protein DnaJ of Agrobacterium fabrum (strain C58 / ATCC 33970) (Agrobacterium tumefaciens (strain C58)).